Reading from the N-terminus, the 71-residue chain is Metallothionein-like protein 1 (71 aa).

This sequence belongs to the metallothionein superfamily. Type 15 family.

Metallothioneins have a high content of cysteine residues that bind various heavy metals. The sequence is that of Metallothionein-like protein 1 (MT1) from Casuarina glauca (Swamp oak).